Consider the following 160-residue polypeptide: Cyclic pyranopterin monophosphate synthase (160 aa).

Substrate contacts are provided by residues 76 to 78 and 114 to 115; these read LCH and ME. The active site involves Asp129.

The protein belongs to the MoaC family. Homohexamer; trimer of dimers.

It carries out the reaction (8S)-3',8-cyclo-7,8-dihydroguanosine 5'-triphosphate = cyclic pyranopterin phosphate + diphosphate. It functions in the pathway cofactor biosynthesis; molybdopterin biosynthesis. In terms of biological role, catalyzes the conversion of (8S)-3',8-cyclo-7,8-dihydroguanosine 5'-triphosphate to cyclic pyranopterin monophosphate (cPMP). The protein is Cyclic pyranopterin monophosphate synthase of Saccharophagus degradans (strain 2-40 / ATCC 43961 / DSM 17024).